The primary structure comprises 1269 residues: Pre-mRNA-splicing factor RSE1 (1269 aa).

It belongs to the RSE1 family. In terms of assembly, associated with the spliceosome.

Its subcellular location is the nucleus. In terms of biological role, involved in pre-mRNA splicing and cell cycle control. The chain is Pre-mRNA-splicing factor RSE1 (RSE1) from Kluyveromyces lactis (strain ATCC 8585 / CBS 2359 / DSM 70799 / NBRC 1267 / NRRL Y-1140 / WM37) (Yeast).